Consider the following 174-residue polypeptide: Ribosome rescue factor SmrB (174 aa).

The 76-residue stretch at 96-171 (LDLHGMNQQQ…GDSAILVLLD (76 aa)) folds into the Smr domain.

The protein belongs to the SmrB family. Associates with collided ribosomes, but not with correctly translating polysomes.

Functionally, acts as a ribosome collision sensor. Detects stalled/collided disomes (pairs of ribosomes where the leading ribosome is stalled and a second ribosome has collided with it) and endonucleolytically cleaves mRNA at the 5' boundary of the stalled ribosome. Stalled/collided disomes form a new interface (primarily via the 30S subunits) that binds SmrB. Cleaved mRNA becomes available for tmRNA ligation, leading to ribosomal subunit dissociation and rescue of stalled ribosomes. The sequence is that of Ribosome rescue factor SmrB from Aeromonas hydrophila subsp. hydrophila (strain ATCC 7966 / DSM 30187 / BCRC 13018 / CCUG 14551 / JCM 1027 / KCTC 2358 / NCIMB 9240 / NCTC 8049).